The sequence spans 577 residues: MNIQALLSEKVSQAMIAAGAPADCEPQVRQSAKVQFGDYQANGMMAVAKKLGMAPRQLAEQVLTHLDLSGIASKVEIAGPGFINIFLEPAFLAEQVQQALASERLGVSQPTRQTIVVDYSAPNVAKEMHVGHLRSTIIGDAAVRTLEFLGHHVIRANHVGDWGTQFGMLIAWLEKQQQENAGDMALADLEGFYRDAKKHYDEDEAFAERARNYVVKLQSGDTYFREMWRKLVDITMTQNQITYDRLNVTLTRDDVMGESLYNPMLPGIVADLKAKGLAVESEGATVVFLDEFKNKEGDPMGVIIQKKDGGYLYTTTDIACAKYRYETLHADRVLYYIDSRQHQHLMQAWTIVRKAGYVPDSVPLEHHMFGMMLGKDGKPFKTRAGGTVKLADLLDEALERARRLVAEKNPDMPADELEKLANAVGIGAVKYADLSKNRTTDYIFDWDNMLAFEGNTAPYMQYAYTRVLSVFRKADIDEQALASAPVIISEDREAQLAARLLQFEETLTVVAREGTPHVMCAYLYDVAGLFSGFYEHCPILSAENDAVRNSRLKLAQLTAKTLKLGLDTLGIETVERM.

The 'HIGH' region signature appears at 122 to 132 (PNVAKEMHVGH).

This sequence belongs to the class-I aminoacyl-tRNA synthetase family. Monomer.

Its subcellular location is the cytoplasm. The catalysed reaction is tRNA(Arg) + L-arginine + ATP = L-arginyl-tRNA(Arg) + AMP + diphosphate. The sequence is that of Arginine--tRNA ligase from Salmonella schwarzengrund (strain CVM19633).